We begin with the raw amino-acid sequence, 189 residues long: Nucleoside triphosphate pyrophosphatase (189 aa).

The Proton acceptor role is filled by Asp70.

Belongs to the Maf family. It depends on a divalent metal cation as a cofactor.

Its subcellular location is the cytoplasm. The catalysed reaction is a ribonucleoside 5'-triphosphate + H2O = a ribonucleoside 5'-phosphate + diphosphate + H(+). It carries out the reaction a 2'-deoxyribonucleoside 5'-triphosphate + H2O = a 2'-deoxyribonucleoside 5'-phosphate + diphosphate + H(+). In terms of biological role, nucleoside triphosphate pyrophosphatase. May have a dual role in cell division arrest and in preventing the incorporation of modified nucleotides into cellular nucleic acids. The chain is Nucleoside triphosphate pyrophosphatase from Xylella fastidiosa (strain M23).